Consider the following 324-residue polypeptide: Methenyltetrahydromethanopterin cyclohydrolase (324 aa).

The protein belongs to the MCH family.

Its subcellular location is the cytoplasm. It catalyses the reaction 5,10-methenyl-5,6,7,8-tetrahydromethanopterin + H2O = N(5)-formyl-5,6,7,8-tetrahydromethanopterin + H(+). It functions in the pathway one-carbon metabolism; formaldehyde degradation; formate from formaldehyde (H(4)MPT route): step 3/5. Functionally, catalyzes the hydrolysis of methenyl-H(4)MPT(+) to 5-formyl-H(4)MPT. In Methylobacterium sp. (strain 4-46), this protein is Methenyltetrahydromethanopterin cyclohydrolase.